A 938-amino-acid polypeptide reads, in one-letter code: Phosphoenolpyruvate carboxylase (938 aa).

Active-site residues include His-151 and Lys-591.

The protein belongs to the PEPCase type 1 family. The cofactor is Mg(2+).

It catalyses the reaction oxaloacetate + phosphate = phosphoenolpyruvate + hydrogencarbonate. In terms of biological role, forms oxaloacetate, a four-carbon dicarboxylic acid source for the tricarboxylic acid cycle. In Roseiflexus castenholzii (strain DSM 13941 / HLO8), this protein is Phosphoenolpyruvate carboxylase.